Here is a 130-residue protein sequence, read N- to C-terminus: Small ribosomal subunit protein uS11 (130 aa).

Belongs to the universal ribosomal protein uS11 family. In terms of assembly, part of the 30S ribosomal subunit. Interacts with proteins S7 and S18. Binds to IF-3.

Its function is as follows. Located on the platform of the 30S subunit, it bridges several disparate RNA helices of the 16S rRNA. Forms part of the Shine-Dalgarno cleft in the 70S ribosome. The protein is Small ribosomal subunit protein uS11 of Prochlorococcus marinus (strain MIT 9301).